The chain runs to 349 residues: Probable dual-specificity RNA methyltransferase RlmN (349 aa).

Residue glutamate 94 is the Proton acceptor of the active site. The Radical SAM core domain occupies 100–321; that stretch reads DEDRATLCVS…TQHGVFATIR (222 aa). Cysteines 107 and 332 form a disulfide. The [4Fe-4S] cluster site is built by cysteine 114, cysteine 118, and cysteine 121. Residues 159-160, serine 191, 213-215, and histidine 289 contribute to the S-adenosyl-L-methionine site; these read GE and SMH. The S-methylcysteine intermediate role is filled by cysteine 332.

This sequence belongs to the radical SAM superfamily. RlmN family. It depends on [4Fe-4S] cluster as a cofactor.

The protein localises to the cytoplasm. It catalyses the reaction adenosine(2503) in 23S rRNA + 2 reduced [2Fe-2S]-[ferredoxin] + 2 S-adenosyl-L-methionine = 2-methyladenosine(2503) in 23S rRNA + 5'-deoxyadenosine + L-methionine + 2 oxidized [2Fe-2S]-[ferredoxin] + S-adenosyl-L-homocysteine. The catalysed reaction is adenosine(37) in tRNA + 2 reduced [2Fe-2S]-[ferredoxin] + 2 S-adenosyl-L-methionine = 2-methyladenosine(37) in tRNA + 5'-deoxyadenosine + L-methionine + 2 oxidized [2Fe-2S]-[ferredoxin] + S-adenosyl-L-homocysteine. Its function is as follows. Specifically methylates position 2 of adenine 2503 in 23S rRNA and position 2 of adenine 37 in tRNAs. This Phocaeicola vulgatus (strain ATCC 8482 / DSM 1447 / JCM 5826 / CCUG 4940 / NBRC 14291 / NCTC 11154) (Bacteroides vulgatus) protein is Probable dual-specificity RNA methyltransferase RlmN.